The chain runs to 308 residues: 4-hydroxyproline 2-epimerase (308 aa).

C88 acts as the Proton acceptor in catalysis. Residues 89–90, H208, and D232 each bind substrate; that span reads GH. C236 serves as the catalytic Proton donor. 237–238 is a substrate binding site; sequence GT.

The protein belongs to the proline racemase family.

It carries out the reaction trans-4-hydroxy-L-proline = cis-4-hydroxy-D-proline. Functionally, catalyzes the epimerization of trans-4-hydroxy-L-proline (t4LHyp) to cis-4-hydroxy-D-proline (c4DHyp). Is likely involved in a degradation pathway that converts t4LHyp to alpha-ketoglutarate. Can also catalyze the epimerization of trans-3-hydroxy-L-proline (t3LHyp) to cis-3-hydroxy-D-proline (c3DHyp), albeit with 19-fold lower efficiency. Displays no proline racemase activity. In Chromobacterium violaceum (strain ATCC 12472 / DSM 30191 / JCM 1249 / CCUG 213 / NBRC 12614 / NCIMB 9131 / NCTC 9757 / MK), this protein is 4-hydroxyproline 2-epimerase.